The primary structure comprises 253 residues: 3-deoxy-manno-octulosonate cytidylyltransferase (253 aa).

Belongs to the KdsB family.

The protein localises to the cytoplasm. The catalysed reaction is 3-deoxy-alpha-D-manno-oct-2-ulosonate + CTP = CMP-3-deoxy-beta-D-manno-octulosonate + diphosphate. It functions in the pathway nucleotide-sugar biosynthesis; CMP-3-deoxy-D-manno-octulosonate biosynthesis; CMP-3-deoxy-D-manno-octulosonate from 3-deoxy-D-manno-octulosonate and CTP: step 1/1. It participates in bacterial outer membrane biogenesis; lipopolysaccharide biosynthesis. Its function is as follows. Activates KDO (a required 8-carbon sugar) for incorporation into bacterial lipopolysaccharide in Gram-negative bacteria. The chain is 3-deoxy-manno-octulosonate cytidylyltransferase from Haemophilus ducreyi (strain 35000HP / ATCC 700724).